The following is a 366-amino-acid chain: Ribosomal RNA large subunit methyltransferase M (366 aa).

Residues S188, 221–224, D240, D260, and D277 contribute to the S-adenosyl-L-methionine site; that span reads CPGG. Catalysis depends on K306, which acts as the Proton acceptor.

This sequence belongs to the class I-like SAM-binding methyltransferase superfamily. RNA methyltransferase RlmE family. RlmM subfamily. As to quaternary structure, monomer.

Its subcellular location is the cytoplasm. The catalysed reaction is cytidine(2498) in 23S rRNA + S-adenosyl-L-methionine = 2'-O-methylcytidine(2498) in 23S rRNA + S-adenosyl-L-homocysteine + H(+). Functionally, catalyzes the 2'-O-methylation at nucleotide C2498 in 23S rRNA. This Sodalis glossinidius (strain morsitans) protein is Ribosomal RNA large subunit methyltransferase M.